Reading from the N-terminus, the 406-residue chain is Serine/threonine transporter SstT (406 aa).

The next 9 membrane-spanning stretches (helical) occupy residues 15–35, 47–67, 81–101, 140–160, 191–211, 215–235, 289–309, 315–335, and 362–382; these read LVLQ…VSPS, FVGA…AASI, IIAM…VLSF, ALMS…GLAL, FGIF…ALAG, LLVV…PAMV, IPLG…TLTL, MGIE…AVSA, and IAMQ…SAET.

Belongs to the dicarboxylate/amino acid:cation symporter (DAACS) (TC 2.A.23) family.

The protein resides in the cell inner membrane. It carries out the reaction L-serine(in) + Na(+)(in) = L-serine(out) + Na(+)(out). It catalyses the reaction L-threonine(in) + Na(+)(in) = L-threonine(out) + Na(+)(out). Functionally, involved in the import of serine and threonine into the cell, with the concomitant import of sodium (symport system). The polypeptide is Serine/threonine transporter SstT (Vibrio vulnificus (strain CMCP6)).